The sequence spans 181 residues: uncharacterized protein (181 aa).

The disordered stretch occupies residues 126-148 (SYKDKEEEEDEDPEEDDDDPRVQ). Acidic residues predominate over residues 131-144 (EEEEDEDPEEDDDD).

It belongs to the chlamydial CPn_0422/CT_273/TC_0545 family.

This is an uncharacterized protein from Chlamydia pneumoniae (Chlamydophila pneumoniae).